Here is a 283-residue protein sequence, read N- to C-terminus: Lectin-like protein At1g53080 (283 aa).

Positions 1–23 (MQIHKLCIFVLFISLLSSKTISA) are cleaved as a signal peptide. Residues 24–277 (VKFNFNRFDG…RHDIWSWSFE (254 aa)) are legume-lectin like. N-linked (GlcNAc...) asparagine glycans are attached at residues N84 and N138. At S247 the chain carries Phosphoserine.

The protein belongs to the leguminous lectin family.

It localises to the secreted. The protein localises to the extracellular space. It is found in the apoplast. The sequence is that of Lectin-like protein At1g53080 from Arabidopsis thaliana (Mouse-ear cress).